A 521-amino-acid chain; its full sequence is MGSEHPVDGMTRRQFFAKAAAATTAGAFMSLAGPIIEKAYGAGPCPGHLTDIEHIVLLMQENRSFDHYFGTLSDTRGFDDTTPPVVFAQSGWNPMTQAVDPAGVTLPYRFDTTRGPLVAGECVNDPDHSWIGMHNSWNGGANDNWLPAQVPFSPLQGNVPVTMGFYTRRDLPIHYLLADTFTVCDGYFCSLLGGTTPNRLYWMSAWIDPDGTDGGPVLIEPNIQPLQHYSWRIMPENLEDAGVSWKVYQNKLLGALNNTVVGYNGLVNDFKQAADPRSNLARFGISPTYPLDFAADVRNNRLPKVSWVLPGFLLSEHPAFPVNVGAVAIVDALRILLSNPAVWEKTALIVNYDENGGFFDHVVPPTPPPGTPGEFVTVPDIDSVPGSGGIRGPIGLGFRVPCLVISPYSRGPLMVHDTFDHTSTLKLIRARFGVPVPNLTAWRDATVGDMTSTFNFAAPPNPSKPNLDHPRLNALPKLPQCVPNAVLGTVTKTAIPYRVPFPQSMPTQETAPTRGIPSGLC.

A signal peptide (tat-type signal) is located at residues M1–A39. Residues F501–C521 form a disordered region.

The protein belongs to the bacterial phospholipase C family. In terms of processing, predicted to be exported by the Tat system. The position of the signal peptide cleavage has not been experimentally proven.

It is found in the secreted. The protein localises to the cell wall. It catalyses the reaction a 1,2-diacyl-sn-glycero-3-phosphocholine + H2O = phosphocholine + a 1,2-diacyl-sn-glycerol + H(+). In terms of biological role, involved in virulence. Induces cytotoxic effects on mouse macrophage cell lines, via direct or indirect enzymatic hydrolysis of cell membrane phospholipids. Hydrolyzes phosphatidylcholine. This is Phospholipase C B from Mycobacterium tuberculosis (strain CDC 1551 / Oshkosh).